The chain runs to 272 residues: NADPH-dependent 7-cyano-7-deazaguanine reductase (272 aa).

Isoleucine 82–serine 84 provides a ligand contact to substrate. Serine 84–lysine 85 is an NADPH binding site. Cysteine 178 acts as the Thioimide intermediate in catalysis. Catalysis depends on aspartate 185, which acts as the Proton donor. Histidine 217–glutamate 218 lines the substrate pocket. Arginine 246–glycine 247 provides a ligand contact to NADPH.

Belongs to the GTP cyclohydrolase I family. QueF type 2 subfamily. In terms of assembly, homodimer.

Its subcellular location is the cytoplasm. The enzyme catalyses 7-aminomethyl-7-carbaguanine + 2 NADP(+) = 7-cyano-7-deazaguanine + 2 NADPH + 3 H(+). It participates in tRNA modification; tRNA-queuosine biosynthesis. Catalyzes the NADPH-dependent reduction of 7-cyano-7-deazaguanine (preQ0) to 7-aminomethyl-7-deazaguanine (preQ1). In Stenotrophomonas maltophilia (strain R551-3), this protein is NADPH-dependent 7-cyano-7-deazaguanine reductase.